Consider the following 239-residue polypeptide: Ribosomal RNA small subunit methyltransferase G (239 aa).

Residues G78, F83, 129-130, and R148 contribute to the S-adenosyl-L-methionine site; that span reads AE.

Belongs to the methyltransferase superfamily. RNA methyltransferase RsmG family.

It is found in the cytoplasm. Functionally, specifically methylates the N7 position of a guanine in 16S rRNA. This is Ribosomal RNA small subunit methyltransferase G from Desulfitobacterium hafniense (strain Y51).